Here is a 37-residue protein sequence, read N- to C-terminus: Large ribosomal subunit protein bL36 (37 aa).

Belongs to the bacterial ribosomal protein bL36 family.

The sequence is that of Large ribosomal subunit protein bL36 from Caldanaerobacter subterraneus subsp. tengcongensis (strain DSM 15242 / JCM 11007 / NBRC 100824 / MB4) (Thermoanaerobacter tengcongensis).